Here is a 350-residue protein sequence, read N- to C-terminus: Phosphoribosylformylglycinamidine cyclo-ligase (350 aa).

Belongs to the AIR synthase family.

The protein localises to the cytoplasm. The enzyme catalyses 2-formamido-N(1)-(5-O-phospho-beta-D-ribosyl)acetamidine + ATP = 5-amino-1-(5-phospho-beta-D-ribosyl)imidazole + ADP + phosphate + H(+). It functions in the pathway purine metabolism; IMP biosynthesis via de novo pathway; 5-amino-1-(5-phospho-D-ribosyl)imidazole from N(2)-formyl-N(1)-(5-phospho-D-ribosyl)glycinamide: step 2/2. The polypeptide is Phosphoribosylformylglycinamidine cyclo-ligase (Cupriavidus necator (strain ATCC 17699 / DSM 428 / KCTC 22496 / NCIMB 10442 / H16 / Stanier 337) (Ralstonia eutropha)).